We begin with the raw amino-acid sequence, 224 residues long: Peroxiredoxin-6 (224 aa).

Residues 5–169 (LLLGDVAPNF…ILRVVISLQL (165 aa)) form the Thioredoxin domain. The tract at residues 31–40 (DSWGILFSHP) is required and sufficient for targeting to lysosomes and lamellar bodies. At Thr44 the chain carries Phosphothreonine. The Cysteine sulfenic acid (-SOH) intermediate; for peroxidase activity role is filled by Cys47. At Lys63 the chain carries N6-acetyllysine. Tyr89 carries the phosphotyrosine modification. The active-site For phospholipase activity is Asp140. At Thr177 the chain carries Phosphothreonine; by MAPK. An N6-acetyllysine; alternate modification is found at Lys209. Lys209 carries the post-translational modification N6-succinyllysine; alternate.

This sequence belongs to the peroxiredoxin family. Prx6 subfamily. Homodimer. Interacts with GSTP1; mediates PRDX6 glutathionylation and regeneration. Interacts with APEX1. Interacts with STH. May interact with FAM168B. May interact with HTR2A. Irreversibly inactivated by overoxidation of Cys-47 to sulfinic acid (Cys-SO(2)H) and sulfonic acid (Cys-SO(3)H) forms upon oxidative stress. In terms of processing, phosphorylation at Thr-177 by MAP kinases increases the phospholipase activity of the enzyme. The phosphorylated form exhibits a greater lysophosphatidylcholine acyltransferase activity compared to the non-phosphorylated form.

The protein resides in the cytoplasm. It localises to the lysosome. It catalyses the reaction a hydroperoxide + 2 glutathione = an alcohol + glutathione disulfide + H2O. The catalysed reaction is a 1,2-diacyl-sn-glycero-3-phosphocholine + H2O = a 1-acyl-sn-glycero-3-phosphocholine + a fatty acid + H(+). It carries out the reaction a 1-acyl-sn-glycero-3-phosphocholine + an acyl-CoA = a 1,2-diacyl-sn-glycero-3-phosphocholine + CoA. The enzyme catalyses 1-hexadecanoyl-sn-glycero-3-phosphocholine + hexadecanoyl-CoA = 1,2-dihexadecanoyl-sn-glycero-3-phosphocholine + CoA. It catalyses the reaction 1,2-dihexadecanoyl-sn-glycero-3-phosphocholine + H2O = 1-hexadecanoyl-sn-glycero-3-phosphocholine + hexadecanoate + H(+). In terms of biological role, thiol-specific peroxidase that catalyzes the reduction of hydrogen peroxide and organic hydroperoxides to water and alcohols, respectively. Can reduce H(2)O(2) and short chain organic, fatty acid, and phospholipid hydroperoxides. Also has phospholipase activity, and can therefore either reduce the oxidized sn-2 fatty acyl group of phospholipids (peroxidase activity) or hydrolyze the sn-2 ester bond of phospholipids (phospholipase activity). These activities are dependent on binding to phospholipids at acidic pH and to oxidized phospholipds at cytosolic pH. Plays a role in cell protection against oxidative stress by detoxifying peroxides and in phospholipid homeostasis. Exhibits acyl-CoA-dependent lysophospholipid acyltransferase which mediates the conversion of lysophosphatidylcholine (1-acyl-sn-glycero-3-phosphocholine or LPC) into phosphatidylcholine (1,2-diacyl-sn-glycero-3-phosphocholine or PC). Shows a clear preference for LPC as the lysophospholipid and for palmitoyl CoA as the fatty acyl substrate. In Pongo abelii (Sumatran orangutan), this protein is Peroxiredoxin-6 (PRDX6).